The sequence spans 417 residues: UDP-N-acetylglucosamine 1-carboxyvinyltransferase (417 aa).

22–23 contacts phosphoenolpyruvate; that stretch reads KN. Arg-91 contacts UDP-N-acetyl-alpha-D-glucosamine. Cys-115 functions as the Proton donor in the catalytic mechanism. Residue Cys-115 is modified to 2-(S-cysteinyl)pyruvic acid O-phosphothioketal. UDP-N-acetyl-alpha-D-glucosamine contacts are provided by residues 120-124, Asp-304, and Ile-326; that span reads RPVDL.

It belongs to the EPSP synthase family. MurA subfamily.

It localises to the cytoplasm. The enzyme catalyses phosphoenolpyruvate + UDP-N-acetyl-alpha-D-glucosamine = UDP-N-acetyl-3-O-(1-carboxyvinyl)-alpha-D-glucosamine + phosphate. Its pathway is cell wall biogenesis; peptidoglycan biosynthesis. Cell wall formation. Adds enolpyruvyl to UDP-N-acetylglucosamine. This chain is UDP-N-acetylglucosamine 1-carboxyvinyltransferase, found in Nitratidesulfovibrio vulgaris (strain ATCC 29579 / DSM 644 / CCUG 34227 / NCIMB 8303 / VKM B-1760 / Hildenborough) (Desulfovibrio vulgaris).